A 70-amino-acid polypeptide reads, in one-letter code: Small ribosomal subunit protein bS21 (70 aa).

The interval 39-70 (EKPTTERKRKKAAAVSRTRKRLRSQMLPKKLY) is disordered. Residues 45–61 (RKRKKAAAVSRTRKRLR) are compositionally biased toward basic residues.

It belongs to the bacterial ribosomal protein bS21 family.

The sequence is that of Small ribosomal subunit protein bS21 from Ralstonia nicotianae (strain ATCC BAA-1114 / GMI1000) (Ralstonia solanacearum).